A 234-amino-acid chain; its full sequence is Thiamine-phosphate synthase (234 aa).

4-amino-2-methyl-5-(diphosphooxymethyl)pyrimidine is bound by residues 65 to 69 and Asn-97; that span reads QYRNK. Residues Asp-98 and Asp-117 each contribute to the Mg(2+) site. Ser-136 contributes to the 4-amino-2-methyl-5-(diphosphooxymethyl)pyrimidine binding site. 163-165 is a binding site for 2-[(2R,5Z)-2-carboxy-4-methylthiazol-5(2H)-ylidene]ethyl phosphate; that stretch reads SHT. A 4-amino-2-methyl-5-(diphosphooxymethyl)pyrimidine-binding site is contributed by Lys-166. 2-[(2R,5Z)-2-carboxy-4-methylthiazol-5(2H)-ylidene]ethyl phosphate-binding positions include Gly-192 and 212–213; that span reads IS.

It belongs to the thiamine-phosphate synthase family. Mg(2+) is required as a cofactor.

It catalyses the reaction 2-[(2R,5Z)-2-carboxy-4-methylthiazol-5(2H)-ylidene]ethyl phosphate + 4-amino-2-methyl-5-(diphosphooxymethyl)pyrimidine + 2 H(+) = thiamine phosphate + CO2 + diphosphate. The enzyme catalyses 2-(2-carboxy-4-methylthiazol-5-yl)ethyl phosphate + 4-amino-2-methyl-5-(diphosphooxymethyl)pyrimidine + 2 H(+) = thiamine phosphate + CO2 + diphosphate. It carries out the reaction 4-methyl-5-(2-phosphooxyethyl)-thiazole + 4-amino-2-methyl-5-(diphosphooxymethyl)pyrimidine + H(+) = thiamine phosphate + diphosphate. Its pathway is cofactor biosynthesis; thiamine diphosphate biosynthesis; thiamine phosphate from 4-amino-2-methyl-5-diphosphomethylpyrimidine and 4-methyl-5-(2-phosphoethyl)-thiazole: step 1/1. Its function is as follows. Condenses 4-methyl-5-(beta-hydroxyethyl)thiazole monophosphate (THZ-P) and 2-methyl-4-amino-5-hydroxymethyl pyrimidine pyrophosphate (HMP-PP) to form thiamine monophosphate (TMP). The sequence is that of Thiamine-phosphate synthase from Xylella fastidiosa (strain Temecula1 / ATCC 700964).